The chain runs to 83 residues: EKCLDQIQVNSLENLSLLVPSLCLLPPVRGNCSSQILHYFYNTTSRTCETFIYSGCNGNRNNFNSEEYCLKTCRRNKNRNNNN.

N-linked (GlcNAc...) asparagine glycans are attached at residues Asn14, Asn31, and Asn42. The BPTI/Kunitz inhibitor domain maps to 23–73; the sequence is CLLPPVRGNCSSQILHYFYNTTSRTCETFIYSGCNGNRNNFNSEEYCLKTC. Cystine bridges form between Cys23–Cys73, Cys32–Cys56, and Cys48–Cys69.

In terms of processing, N-glycosylated. As to expression, found in the whey fraction of milk.

The protein localises to the secreted. This is Early lactation protein (ELP) from Notamacropus eugenii (Tammar wallaby).